A 181-amino-acid chain; its full sequence is Large ribosomal subunit protein uL10 (181 aa).

It belongs to the universal ribosomal protein uL10 family. As to quaternary structure, part of the ribosomal stalk of the 50S ribosomal subunit. The N-terminus interacts with L11 and the large rRNA to form the base of the stalk. The C-terminus forms an elongated spine to which L12 dimers bind in a sequential fashion forming a multimeric L10(L12)X complex.

Functionally, forms part of the ribosomal stalk, playing a central role in the interaction of the ribosome with GTP-bound translation factors. The protein is Large ribosomal subunit protein uL10 of Trichormus variabilis (strain ATCC 29413 / PCC 7937) (Anabaena variabilis).